Here is a 65-residue protein sequence, read N- to C-terminus: Probable tautomerase RSp1151 (65 aa).

Proline 2 serves as the catalytic Proton acceptor; via imino nitrogen.

This sequence belongs to the 4-oxalocrotonate tautomerase family.

The polypeptide is Probable tautomerase RSp1151 (Ralstonia nicotianae (strain ATCC BAA-1114 / GMI1000) (Ralstonia solanacearum)).